Consider the following 118-residue polypeptide: Ferredoxin-thioredoxin reductase, catalytic chain (118 aa).

Cysteine 56 contacts [4Fe-4S] cluster. The Nucleophile role is filled by cysteine 58. A disulfide bond links cysteine 58 and cysteine 88. 3 residues coordinate [4Fe-4S] cluster: cysteine 75, cysteine 77, and cysteine 86.

Belongs to the ferredoxin thioredoxin reductase beta subunit family. Heterodimer of subunit A (variable subunit) and subunit B (catalytic subunit). Heterodimeric FTR forms a complex with ferredoxin and thioredoxin. [4Fe-4S] cluster is required as a cofactor.

The enzyme catalyses [thioredoxin]-disulfide + 2 reduced [2Fe-2S]-[ferredoxin] + 2 H(+) = [thioredoxin]-dithiol + 2 oxidized [2Fe-2S]-[ferredoxin]. Catalytic subunit of the ferredoxin-thioredoxin reductase (FTR), which catalyzes the two-electron reduction of thioredoxins by the electrons provided by reduced ferredoxin. The chain is Ferredoxin-thioredoxin reductase, catalytic chain from Synechocystis sp. (strain ATCC 27184 / PCC 6803 / Kazusa).